A 386-amino-acid polypeptide reads, in one-letter code: ORC1-type DNA replication protein 3 (386 aa).

ATP-binding positions include Thr65–Phe69 and Tyr206.

The protein belongs to the CDC6/cdc18 family.

Involved in regulation of DNA replication. This chain is ORC1-type DNA replication protein 3 (cdc6-3), found in Sulfurisphaera tokodaii (strain DSM 16993 / JCM 10545 / NBRC 100140 / 7) (Sulfolobus tokodaii).